We begin with the raw amino-acid sequence, 165 residues long: Ribosome maturation factor RimM (165 aa).

The 70-residue stretch at 94–163 (EDEFYIADLN…KDYVTLNYQR (70 aa)) folds into the PRC barrel domain.

The protein belongs to the RimM family. Binds ribosomal protein uS19.

Its subcellular location is the cytoplasm. Its function is as follows. An accessory protein needed during the final step in the assembly of 30S ribosomal subunit, possibly for assembly of the head region. Essential for efficient processing of 16S rRNA. May be needed both before and after RbfA during the maturation of 16S rRNA. It has affinity for free ribosomal 30S subunits but not for 70S ribosomes. This Rickettsia akari (strain Hartford) protein is Ribosome maturation factor RimM.